Here is a 374-residue protein sequence, read N- to C-terminus: MQNTSFDNESDYSDDSDFASASETENRIGLTVPLELAGGRLDAVLAKLLPDYSRSRLTLWIKEGAVIVNDKPSQPKDKMIGGEQIRVTVRPSEENLAFVPEPMALDIVYEDDTVIVVNKPAGLVVHPAAGNWTGTLLNGLLAHCPELSQIPRAGIVHRLDKETSGLMVVAKTLPAQNSLVWQLQERTVKRIYRAVANGIVPFDGKIETQIGRDPHNRLKMAVVKFGGKPAVTHVKVLERYLAHSYIECSLETGRTHQIRVHMREANHPLAGDPVYGNPRHPCGDTVKEAVKSLGARQALHAYRLSFTHPESGETVSFEAPIPDDIYHLLSVLRLEAGLDSSLSNEEEWQDKFGADDDDDWNEDDYDVEVVYVRE.

The segment at 1–20 is disordered; the sequence is MQNTSFDNESDYSDDSDFAS. Acidic residues predominate over residues 8-17; sequence NESDYSDDSD. The S4 RNA-binding domain occupies 39–112; it reads GRLDAVLAKL…MALDIVYEDD (74 aa). Residue aspartate 160 is part of the active site.

This sequence belongs to the pseudouridine synthase RluA family.

Its subcellular location is the cytoplasm. It catalyses the reaction uridine(1911/1915/1917) in 23S rRNA = pseudouridine(1911/1915/1917) in 23S rRNA. Its function is as follows. Responsible for synthesis of pseudouridine from uracil at positions 1911, 1915 and 1917 in 23S ribosomal RNA. The protein is Ribosomal large subunit pseudouridine synthase D (rluD) of Neisseria meningitidis serogroup A / serotype 4A (strain DSM 15465 / Z2491).